A 122-amino-acid chain; its full sequence is Large ribosomal subunit protein uL14 (122 aa).

This sequence belongs to the universal ribosomal protein uL14 family. In terms of assembly, part of the 50S ribosomal subunit. Forms a cluster with proteins L3 and L19. In the 70S ribosome, L14 and L19 interact and together make contacts with the 16S rRNA in bridges B5 and B8.

Functionally, binds to 23S rRNA. Forms part of two intersubunit bridges in the 70S ribosome. In Rhodococcus jostii (strain RHA1), this protein is Large ribosomal subunit protein uL14.